The sequence spans 226 residues: ATP-dependent dethiobiotin synthetase BioD (226 aa).

An ATP-binding site is contributed by 12-17 (GVGKTV). Residue T16 coordinates Mg(2+). K37 is a catalytic residue. T41 is a binding site for substrate. ATP-binding positions include D49, 108–111 (EGAG), 169–170 (GS), and 197–199 (PAG). Residues D49 and E108 each contribute to the Mg(2+) site.

This sequence belongs to the dethiobiotin synthetase family. Homodimer. It depends on Mg(2+) as a cofactor.

The protein localises to the cytoplasm. The catalysed reaction is (7R,8S)-7,8-diammoniononanoate + CO2 + ATP = (4R,5S)-dethiobiotin + ADP + phosphate + 3 H(+). Its pathway is cofactor biosynthesis; biotin biosynthesis; biotin from 7,8-diaminononanoate: step 1/2. In terms of biological role, catalyzes a mechanistically unusual reaction, the ATP-dependent insertion of CO2 between the N7 and N8 nitrogen atoms of 7,8-diaminopelargonic acid (DAPA, also called 7,8-diammoniononanoate) to form a ureido ring. The protein is ATP-dependent dethiobiotin synthetase BioD of Mycobacterium leprae (strain Br4923).